A 500-amino-acid polypeptide reads, in one-letter code: Tektin-like protein 1 (500 aa).

A coiled-coil region spans residues 198–229 (MLTWEKEELKSMKRKMEADMEKSEALLKTLAS). The residue at position 372 (Tyr-372) is a Phosphotyrosine. Residues 420–444 (DKLQRHISHVEKNLDELLSMRKKLT) adopt a coiled-coil conformation.

In terms of assembly, microtubule inner protein component of sperm flagellar doublet microtubules.

It localises to the cytoplasm. The protein resides in the cytoskeleton. Its subcellular location is the flagellum axoneme. In terms of biological role, microtubule inner protein (MIP) part of the dynein-decorated doublet microtubules (DMTs) in sperm flagellar axoneme, which is required for motile flagellum beating. Forms an extensive interaction network cross-linking the lumen of axonemal doublet microtubules. The chain is Tektin-like protein 1 from Bos taurus (Bovine).